The chain runs to 986 residues: Ephrin type-B receptor 2 (986 aa).

The N-terminal stretch at 1 to 18 (MAVRRLGAALLLLPLLAA) is a signal peptide. Over 19-543 (VEETLMDSTT…QTSIKEKLPL (525 aa)) the chain is Extracellular. An Eph LBD domain is found at 20–202 (EETLMDSTTA…FYRKCPRIIQ (183 aa)). 2 disulfides stabilise this stretch: cysteine 62–cysteine 184 and cysteine 97–cysteine 107. N-linked (GlcNAc...) asparagine glycosylation is found at asparagine 265, asparagine 336, asparagine 428, and asparagine 482. Fibronectin type-III domains lie at 324 to 434 (IPSA…TNQA) and 435 to 530 (APSA…TMTE). The helical transmembrane segment at 544–564 (IVGSSAAGLVFLIAVVVIAIV) threads the bilayer. Residues 565-986 (CNRRGFERAD…QMNQIQSVEV (422 aa)) are Cytoplasmic-facing. A Protein kinase domain is found at 621–884 (VKIEQVIGAG…QIVNTLDKMI (264 aa)). ATP is bound by residues 627–635 (IGAGEFGEV) and lysine 653. Aspartate 746 (proton acceptor) is an active-site residue. Lysine 891 is covalently cross-linked (Glycyl lysine isopeptide (Lys-Gly) (interchain with G-Cter in ubiquitin)). The SAM domain occupies 913 to 977 (TSFNTVDEWL…LNSIQVMRAQ (65 aa)). The PDZ-binding signature appears at 984–986 (VEV).

This sequence belongs to the protein kinase superfamily. Tyr protein kinase family. Ephrin receptor subfamily. As to quaternary structure, heterotetramer upon binding of the ligand. The heterotetramer is composed of an ephrin dimer and a receptor dimer. Interacts (via PDZ-binding motif) with GRIP1 and PICK1 (via PDZ domain). Interacts with ARHGEF15; mediates ARHGEF15 phosphorylation, ubiquitination and degradation by the proteasome. Interacts with AQP1; involved in endolymph production in the inner ear. Interacts with EFNA5. Interacts with SPSB1. Interacts with SPSB4. Interacts with SH2D3C. In terms of processing, autophosphorylated; ligand binding stimulates autophosphorylation on tyrosine residues. Ligand binding induces cleavage by matrix metalloproteinases (MMPs) such as MMP7/MMP9, producing an EphB2/N-terminal fragment (NTF) and a C-terminal long fragment (EphB2-LF). EphB2-LF is further cleaved by MMPs, producing EphB2/CTF1 which is further cleaved by the PS1/gamma-secretase producing EphB2/CTF2. Post-translationally, polyubiquitinated; ligand binding stimulates ubiquitination. Ubiquitinated by RNF186 at Lys-891, mainly through 'Lys-27'-linked polyubiquitin chains. Ubiquitinated by CRL2(KLHDC2) E3 ligase complex. In terms of tissue distribution, expressed in the epithelial dark cells of the inner ear. Expressed in the region of the proximal tubules of the kidney nephron. Expressed in myogenic progenitor cells.

The protein localises to the cell membrane. Its subcellular location is the cell projection. It localises to the axon. It is found in the dendrite. It catalyses the reaction L-tyrosyl-[protein] + ATP = O-phospho-L-tyrosyl-[protein] + ADP + H(+). Receptor tyrosine kinase which binds promiscuously transmembrane ephrin-B family ligands residing on adjacent cells, leading to contact-dependent bidirectional signaling into neighboring cells. The signaling pathway downstream of the receptor is referred to as forward signaling while the signaling pathway downstream of the ephrin ligand is referred to as reverse signaling. Functions in axon guidance during development. Involved in the guidance of commissural axons, that form a major interhemispheric connection between the 2 temporal lobes of the cerebral cortex. Also involved in guidance of contralateral inner ear efferent growth cones at the midline and of retinal ganglion cell axons to the optic disk. In addition to axon guidance, also regulates dendritic spines development and maturation and stimulates the formation of excitatory synapses. Upon activation by EFNB1, abolishes the ARHGEF15-mediated negative regulation on excitatory synapse formation. Controls other aspects of development including angiogenesis, palate development and in inner ear development through regulation of endolymph production. Forward and reverse signaling through the EFNB2/EPHB2 complex regulate movement and adhesion of cells that tubularize the urethra and septate the cloaca. May function as a tumor suppressor. May be involved in the regulation of platelet activation and blood coagulation. The chain is Ephrin type-B receptor 2 from Mus musculus (Mouse).